Reading from the N-terminus, the 127-residue chain is Large ribosomal subunit protein bL17 (127 aa).

Belongs to the bacterial ribosomal protein bL17 family. As to quaternary structure, part of the 50S ribosomal subunit. Contacts protein L32.

The chain is Large ribosomal subunit protein bL17 from Xanthomonas euvesicatoria pv. vesicatoria (strain 85-10) (Xanthomonas campestris pv. vesicatoria).